A 305-amino-acid chain; its full sequence is Tyrosine recombinase XerC (305 aa).

Positions 1–84 constitute a Core-binding (CB) domain; the sequence is MNEVFESYLT…TLRGFYKYAL (84 aa). Positions 105–299 constitute a Tyr recombinase domain; it reads KLPVFMFPKQ…TAEQLQNLYK (195 aa). Catalysis depends on residues Arg-146, Lys-170, His-251, Arg-254, and His-277. Tyr-286 functions as the O-(3'-phospho-DNA)-tyrosine intermediate in the catalytic mechanism.

It belongs to the 'phage' integrase family. XerC subfamily. In terms of assembly, forms a cyclic heterotetrameric complex composed of two molecules of XerC and two molecules of XerD.

Its subcellular location is the cytoplasm. In terms of biological role, site-specific tyrosine recombinase, which acts by catalyzing the cutting and rejoining of the recombining DNA molecules. The XerC-XerD complex is essential to convert dimers of the bacterial chromosome into monomers to permit their segregation at cell division. It also contributes to the segregational stability of plasmids. The polypeptide is Tyrosine recombinase XerC (Treponema denticola (strain ATCC 35405 / DSM 14222 / CIP 103919 / JCM 8153 / KCTC 15104)).